The chain runs to 190 residues: Holliday junction branch migration complex subunit RuvA (190 aa).

The segment at 1–64 (MIGRITGTLI…EDAQLLYGFG (64 aa)) is domain I. A domain II region spans residues 65 to 137 (SSAERSTFRE…MRGKLGADIG (73 aa)). The segment at 137 to 141 (GATPH) is flexible linker. The interval 142-190 (AAGGHQSDILNALLALGYSDKESQAALKKLPEGVDVSEGIRLALKALVR) is domain III.

Belongs to the RuvA family. Homotetramer. Forms an RuvA(8)-RuvB(12)-Holliday junction (HJ) complex. HJ DNA is sandwiched between 2 RuvA tetramers; dsDNA enters through RuvA and exits via RuvB. An RuvB hexamer assembles on each DNA strand where it exits the tetramer. Each RuvB hexamer is contacted by two RuvA subunits (via domain III) on 2 adjacent RuvB subunits; this complex drives branch migration. In the full resolvosome a probable DNA-RuvA(4)-RuvB(12)-RuvC(2) complex forms which resolves the HJ.

It is found in the cytoplasm. The RuvA-RuvB-RuvC complex processes Holliday junction (HJ) DNA during genetic recombination and DNA repair, while the RuvA-RuvB complex plays an important role in the rescue of blocked DNA replication forks via replication fork reversal (RFR). RuvA specifically binds to HJ cruciform DNA, conferring on it an open structure. The RuvB hexamer acts as an ATP-dependent pump, pulling dsDNA into and through the RuvAB complex. HJ branch migration allows RuvC to scan DNA until it finds its consensus sequence, where it cleaves and resolves the cruciform DNA. This Bordetella parapertussis (strain 12822 / ATCC BAA-587 / NCTC 13253) protein is Holliday junction branch migration complex subunit RuvA.